Here is a 249-residue protein sequence, read N- to C-terminus: Type III pantothenate kinase (249 aa).

ATP is bound at residue 6–13 (DCGNSFIK). Residues tyrosine 93 and 100 to 103 (GLDR) each bind substrate. The Proton acceptor role is filled by aspartate 102. Aspartate 122 contributes to the K(+) binding site. Residue threonine 125 participates in ATP binding. Threonine 181 is a substrate binding site.

It belongs to the type III pantothenate kinase family. As to quaternary structure, homodimer. The cofactor is NH4(+). K(+) serves as cofactor.

Its subcellular location is the cytoplasm. The catalysed reaction is (R)-pantothenate + ATP = (R)-4'-phosphopantothenate + ADP + H(+). Its pathway is cofactor biosynthesis; coenzyme A biosynthesis; CoA from (R)-pantothenate: step 1/5. Its function is as follows. Catalyzes the phosphorylation of pantothenate (Pan), the first step in CoA biosynthesis. This Pseudomonas syringae pv. syringae (strain B728a) protein is Type III pantothenate kinase.